The sequence spans 484 residues: Protein nucleotidyltransferase YdiU (484 aa).

Positions 81, 83, 84, 103, 115, 116, 166, and 173 each coordinate ATP. Asp244 functions as the Proton acceptor in the catalytic mechanism. Mg(2+)-binding residues include Asn245 and Asp254. Asp254 is an ATP binding site.

The protein belongs to the SELO family. Mg(2+) is required as a cofactor. It depends on Mn(2+) as a cofactor.

The catalysed reaction is L-seryl-[protein] + ATP = 3-O-(5'-adenylyl)-L-seryl-[protein] + diphosphate. It catalyses the reaction L-threonyl-[protein] + ATP = 3-O-(5'-adenylyl)-L-threonyl-[protein] + diphosphate. It carries out the reaction L-tyrosyl-[protein] + ATP = O-(5'-adenylyl)-L-tyrosyl-[protein] + diphosphate. The enzyme catalyses L-histidyl-[protein] + UTP = N(tele)-(5'-uridylyl)-L-histidyl-[protein] + diphosphate. The catalysed reaction is L-seryl-[protein] + UTP = O-(5'-uridylyl)-L-seryl-[protein] + diphosphate. It catalyses the reaction L-tyrosyl-[protein] + UTP = O-(5'-uridylyl)-L-tyrosyl-[protein] + diphosphate. Nucleotidyltransferase involved in the post-translational modification of proteins. It can catalyze the addition of adenosine monophosphate (AMP) or uridine monophosphate (UMP) to a protein, resulting in modifications known as AMPylation and UMPylation. The protein is Protein nucleotidyltransferase YdiU of Shewanella putrefaciens (strain CN-32 / ATCC BAA-453).